The following is a 138-amino-acid chain: Acidic phospholipase A2 PePLA2 (138 aa).

The N-terminal stretch at 1–16 (MRTLWIMAVLLLGVEG) is a signal peptide. Disulfide bonds link C42–C131, C44–C60, C59–C110, C65–C138, C66–C103, C73–C97, and C91–C101. The Ca(2+) site is built by Y43, G45, and G47. Residue H63 is part of the active site. D64 contributes to the Ca(2+) binding site. D104 is an active-site residue.

This sequence belongs to the phospholipase A2 family. Group II subfamily. D49 sub-subfamily. The cofactor is Ca(2+). In terms of tissue distribution, expressed by the venom gland.

It localises to the secreted. It catalyses the reaction a 1,2-diacyl-sn-glycero-3-phosphocholine + H2O = a 1-acyl-sn-glycero-3-phosphocholine + a fatty acid + H(+). PLA2 catalyzes the calcium-dependent hydrolysis of the 2-acyl groups in 3-sn-phosphoglycerides. The chain is Acidic phospholipase A2 PePLA2 from Protobothrops elegans (Elegant pitviper).